Consider the following 370-residue polypeptide: Tyrosyl-DNA phosphodiesterase 2 (370 aa).

Met1 carries the post-translational modification N-acetylmethionine. The disordered stretch occupies residues Met1 to Arg32. The span at Ala9 to Ala26 shows a compositional bias: low complexity. Residue Lys34 forms a Glycyl lysine isopeptide (Lys-Gly) (interchain with G-Cter in SUMO2) linkage. Position 99 is a phosphothreonine; by ACVR1B (Thr99). Positions Asn130 to Leu134 are interaction with 5' end of substrate DNA. The Mg(2+) site is built by Asp132 and Glu162. The interaction with 5' end of substrate DNA stretch occupies residues His236–Arg241. The active-site Proton donor/acceptor is Asp272. Interaction with 5' end of substrate DNA regions lie at residues Asn274–Arg276 and Leu315–Tyr321.

It belongs to the CCR4/nocturin family. As to quaternary structure, interacts with TRAF2, TRAF3, TRAF5, TRAF6, TNFRSF8/CD30, TNFRSF5/CD40, TNFRSF1B/TNF-R75, ETS1, ETS2, FLI1, SMAD3 and ACVR1B/ALK4. It depends on Mg(2+) as a cofactor. Mn(2+) is required as a cofactor. Ubiquitinated by TRAF6. As to expression, widely expressed. Expressed in whole brain, cerebellum, quiescent cortical astrocytes and cerebellar granule neurons.

It localises to the nucleus. The protein resides in the PML body. It is found in the nucleolus. The protein localises to the cytoplasm. Its function is as follows. DNA repair enzyme that can remove a variety of covalent adducts from DNA through hydrolysis of a 5'-phosphodiester bond, giving rise to DNA with a free 5' phosphate. Catalyzes the hydrolysis of dead-end complexes between DNA and the topoisomerase 2 (TOP2) active site tyrosine residue. The 5'-tyrosyl DNA phosphodiesterase activity can enable the repair of TOP2-induced DNA double-strand breaks/DSBs without the need for nuclease activity, creating a 'clean' DSB with 5'-phosphate termini that are ready for ligation. Thereby, protects the transcription of many genes involved in neurological development and maintenance from the abortive activity of TOP2. Hydrolyzes 5'-phosphoglycolates on protruding 5' ends on DSBs due to DNA damage by radiation and free radicals. Has preference for single-stranded DNA or duplex DNA with a 4 base pair overhang as substrate. Also has 3'-tyrosyl DNA phosphodiesterase activity, but less efficiently and much slower than TDP1. Constitutes the major if not only 5'-tyrosyl-DNA phosphodiesterase in cells. Also acts as an adapter by participating in the specific activation of MAP3K7/TAK1 in response to TGF-beta: associates with components of the TGF-beta receptor-TRAF6-TAK1 signaling module and promotes their ubiquitination dependent complex formation. Involved in non-canonical TGF-beta induced signaling routes. May also act as a negative regulator of ETS1 and may inhibit NF-kappa-B activation. Acts as a regulator of ribosome biogenesis following stress. The protein is Tyrosyl-DNA phosphodiesterase 2 (Tdp2) of Mus musculus (Mouse).